The primary structure comprises 461 residues: Bifunctional protein HldE (461 aa).

The ribokinase stretch occupies residues 1-312 (MLEFLSQQKP…IKSFKRVDFE (312 aa)). Residue 191–194 (NKKE) coordinates ATP. The active site involves Asp259. Residues 334-461 (FTNGCFDIVH…KIIEKIKDKK (128 aa)) are cytidylyltransferase.

In the N-terminal section; belongs to the carbohydrate kinase PfkB family. The protein in the C-terminal section; belongs to the cytidylyltransferase family. Homodimer.

The enzyme catalyses D-glycero-beta-D-manno-heptose 7-phosphate + ATP = D-glycero-beta-D-manno-heptose 1,7-bisphosphate + ADP + H(+). It carries out the reaction D-glycero-beta-D-manno-heptose 1-phosphate + ATP + H(+) = ADP-D-glycero-beta-D-manno-heptose + diphosphate. It functions in the pathway nucleotide-sugar biosynthesis; ADP-L-glycero-beta-D-manno-heptose biosynthesis; ADP-L-glycero-beta-D-manno-heptose from D-glycero-beta-D-manno-heptose 7-phosphate: step 1/4. Its pathway is nucleotide-sugar biosynthesis; ADP-L-glycero-beta-D-manno-heptose biosynthesis; ADP-L-glycero-beta-D-manno-heptose from D-glycero-beta-D-manno-heptose 7-phosphate: step 3/4. It participates in bacterial outer membrane biogenesis; LOS core biosynthesis. In terms of biological role, catalyzes the phosphorylation of D-glycero-D-manno-heptose 7-phosphate at the C-1 position to selectively form D-glycero-beta-D-manno-heptose-1,7-bisphosphate. Catalyzes the ADP transfer from ATP to D-glycero-beta-D-manno-heptose 1-phosphate, yielding ADP-D-glycero-beta-D-manno-heptose. In Campylobacter jejuni subsp. jejuni serotype O:2 (strain ATCC 700819 / NCTC 11168), this protein is Bifunctional protein HldE (hldE).